The following is a 338-amino-acid chain: Ferrochelatase (338 aa).

Fe cation contacts are provided by histidine 202 and glutamate 283.

This sequence belongs to the ferrochelatase family.

Its subcellular location is the cytoplasm. It carries out the reaction heme b + 2 H(+) = protoporphyrin IX + Fe(2+). It functions in the pathway porphyrin-containing compound metabolism; protoheme biosynthesis; protoheme from protoporphyrin-IX: step 1/1. Its function is as follows. Catalyzes the ferrous insertion into protoporphyrin IX. This Acinetobacter baumannii (strain AB307-0294) protein is Ferrochelatase.